Here is a 623-residue protein sequence, read N- to C-terminus: MAAAPRACKGHGRPLPVLLLLLLLALPPLGGPPGAAAYFPEERWSPESPLQAPRVLIALLARNAAHALPATLGALERLRHPRERTALWVATDHNADNTSAVLREWLVAVKGLYHSVEWRPSEEPRSYPDEEGPKHWSDSRYEHVMKLRQAALKSARDMWADYILFVDADNLILNPDTLTLLIAENKTVVAPMLDSRAAYSNFWCGMTSQGYYKRTPAYIPIRKRERRGCFAVPMVHSTFLIDLRKAASRNLAFYPPHPDYTWSFDDIIVFAFSCKQAEVQMYVCNKEVYGFLPVPLRSHSTLQDEAESFMHVQLEVMVKHPPSEPSRFISVPTKTPDKMGFDEVFMINLKRRQDRRERMLRALEEQEIACRLVEAVDGKAMNTSQVEALGIQMLPGYRDPYHGRPLTKGELGCFLSHYNIWKEVVDRGLQKSLVFEDDLRFEIFFKRRLMNLMQDVEREGLDWDLIYVGRKRMQVEHPEKAVPRVRNLVEADYSYWTLAYVISLQGARKLLAARPLSKMLPVDEFLPVMFDKHPVSEYKAHFSPRDLRAFSVEPLLIYPTHYTGDDGYVSDTETSVVWNNEHVKTDWDRAKSQKMREQQALSREAKNSDVLQSPLDSAARDEL.

The signal sequence occupies residues 1-30; sequence MAAAPRACKGHGRPLPVLLLLLLLALPPLG. 3 N-linked (GlcNAc...) asparagine glycosylation sites follow: Asn97, Asn185, and Asn382. The segment covering 589 to 607 has biased composition (basic and acidic residues); sequence RAKSQKMREQQALSREAKN. Residues 589–623 form a disordered region; sequence RAKSQKMREQQALSREAKNSDVLQSPLDSAARDEL. The short motif at 620-623 is the Prevents secretion from ER element; it reads RDEL.

Belongs to the glycosyltransferase 25 family. N-glycosylated.

Its subcellular location is the endoplasmic reticulum lumen. It catalyses the reaction (5R)-5-hydroxy-L-lysyl-[collagen] + UDP-alpha-D-galactose = (5R)-5-O-(beta-D-galactosyl)-5-hydroxy-L-lysyl-[collagen] + UDP + H(+). Beta-galactosyltransferase that transfers beta-galactose to hydroxylysine residues of type I collagen. By acting on collagen glycosylation, facilitates the formation of collagen triple helix. Also involved in the biosynthesis of collagen type IV. This Bos taurus (Bovine) protein is Procollagen galactosyltransferase 1 (COLGALT1).